Consider the following 365-residue polypeptide: UDP-N-acetylglucosamine--N-acetylmuramyl-(pentapeptide) pyrophosphoryl-undecaprenol N-acetylglucosamine transferase (365 aa).

UDP-N-acetyl-alpha-D-glucosamine contacts are provided by residues 17-19 (TGG), N129, R167, S194, I250, 269-274 (ALTVSE), and Q295.

The protein belongs to the glycosyltransferase 28 family. MurG subfamily.

It localises to the cell inner membrane. It carries out the reaction di-trans,octa-cis-undecaprenyl diphospho-N-acetyl-alpha-D-muramoyl-L-alanyl-D-glutamyl-meso-2,6-diaminopimeloyl-D-alanyl-D-alanine + UDP-N-acetyl-alpha-D-glucosamine = di-trans,octa-cis-undecaprenyl diphospho-[N-acetyl-alpha-D-glucosaminyl-(1-&gt;4)]-N-acetyl-alpha-D-muramoyl-L-alanyl-D-glutamyl-meso-2,6-diaminopimeloyl-D-alanyl-D-alanine + UDP + H(+). The protein operates within cell wall biogenesis; peptidoglycan biosynthesis. In terms of biological role, cell wall formation. Catalyzes the transfer of a GlcNAc subunit on undecaprenyl-pyrophosphoryl-MurNAc-pentapeptide (lipid intermediate I) to form undecaprenyl-pyrophosphoryl-MurNAc-(pentapeptide)GlcNAc (lipid intermediate II). The protein is UDP-N-acetylglucosamine--N-acetylmuramyl-(pentapeptide) pyrophosphoryl-undecaprenol N-acetylglucosamine transferase of Shewanella piezotolerans (strain WP3 / JCM 13877).